The following is a 585-amino-acid chain: L-gulonolactone oxidase 3 (585 aa).

An N-terminal signal peptide occupies residues M1 to S24. One can recognise an FAD-binding PCMH-type domain in the interval K51–A233.

It belongs to the oxygen-dependent FAD-linked oxidoreductase family. Requires FAD as cofactor.

The protein localises to the vacuole. It catalyses the reaction L-gulono-1,4-lactone + O2 = L-ascorbate + H2O2 + H(+). Its pathway is cofactor biosynthesis; L-ascorbate biosynthesis. Catalyzes the oxidation of L-gulono-1,4-lactone to ascorbic acid. L-gulono-1,4-lactone is oxidized to hydrogen peroxide and L-xylo-hexulonolactone which spontaneously isomerizes to L-ascorbate. The chain is L-gulonolactone oxidase 3 from Arabidopsis thaliana (Mouse-ear cress).